A 244-amino-acid polypeptide reads, in one-letter code: Salivary gland SP38-40.A protein (244 aa).

Residues 1 to 21 (MRIKFLVVLAVICLFAHYASA) form the signal peptide. 3 disordered regions span residues 23 to 91 (GMGG…EKKQ), 137 to 169 (PPPG…LRKE), and 206 to 244 (VQGK…DAKK). Basic and acidic residues-rich tracts occupy residues 26 to 86 (GDKK…EVKK) and 157 to 169 (PPKE…LRKE). A run of 2 repeats spans residues 29–34 (KPKDAP) and 35–40 (KPKDAP). The segment at 29–47 (KPKDAPKPKDAPKPKEVKP) is 3 X 6 AA approximate tandem repeats of K-P-K-D-A-P. The 1-3; approximate repeat unit spans residues 41–47 (KPKEVKP). 2 repeat units span residues 156–159 (KPPK) and 161–164 (KPPK). Residues 156–168 (KPPKEKPPKKLRK) are 3 X 4 AA approximate tandem repeats of K-P-P-K. One copy of the 2-3; approximate repeat lies at 165–168 (KLRK). Residues 209–224 (KQKKGAKKAKGGKKAA) are compositionally biased toward basic residues. 3 tandem repeats follow at residues 225–228 (PKPG), 229–232 (PKPG), and 233–236 (PKQA). A 4 X 4 AA approximate tandem repeats of P-K-[PQ]-[GA] region spans residues 225-240 (PKPGPKPGPKQADKPK). Basic and acidic residues predominate over residues 235 to 244 (QADKPKDAKK). Residues 237 to 240 (DKPK) form a 3-4; approximate repeat.

Salivary gland.

It localises to the secreted. In terms of biological role, used by the larvae to construct a supramolecular structure, the larval tube. This is Salivary gland SP38-40.A protein (SP38-40.A) from Chironomus tentans (Midge).